The following is a 226-amino-acid chain: MIIIDDLLTKDEVTQFRQQLASVPFNDGKSTAMGMAAGVKNNGQADAQDSRVQQLANALLSKLGNNPTVISGALPQRIFPPCFNRYSESQTYGYHVDAAIMRIPNTPDVLRSDMSMTVFLTPKEDYEGGELVIQTGFGEQKVKCDAGSAILYPSSSLHKVTPVTKGERIAAITWIQSMVSDQQMRETLFQLDQSIQSLVNVGTAEREQLDGLHHVYHNLVRKFSQV.

Residues 77 to 177 (RIFPPCFNRY…RIAAITWIQS (101 aa)) enclose the Fe2OG dioxygenase domain. His95, Asp97, and His158 together coordinate Fe cation. Residue Arg168 coordinates 2-oxoglutarate.

It depends on Fe(2+) as a cofactor. The cofactor is L-ascorbate.

This is PKHD-type hydroxylase MADE_1018490 from Alteromonas mediterranea (strain DSM 17117 / CIP 110805 / LMG 28347 / Deep ecotype).